Reading from the N-terminus, the 291-residue chain is MAGSLSEIKGKIISTQKTSHITGAMQMVSAAKLTKSEQAAKDFQVYASKIRQITTDLLKSELVNGSKNPMLAARPVKKTGYIVITSDKGLVGGYNSKILKAMMDLIEEYHQDGNYAIIAIGGIGADFFKARGMNVVFELRGLEDQPSFEQVGNIIAKSVEMYKNELFDELYVCYNHHVNSLTSQVRVQQMLPIAELDADEAAEEGVSGFELEPNREMILEQLLPQYTESLIYGAIVDAKTAEHAAGMTAMQTATDNAKNVINDLTIQYNRARQAAITQEITEIVAGANALE.

This sequence belongs to the ATPase gamma chain family. In terms of assembly, F-type ATPases have 2 components, CF(1) - the catalytic core - and CF(0) - the membrane proton channel. CF(1) has five subunits: alpha(3), beta(3), gamma(1), delta(1), epsilon(1). CF(0) has three main subunits: a, b and c.

It is found in the cell membrane. Functionally, produces ATP from ADP in the presence of a proton gradient across the membrane. The gamma chain is believed to be important in regulating ATPase activity and the flow of protons through the CF(0) complex. The polypeptide is ATP synthase gamma chain (Streptococcus equinus (Streptococcus bovis)).